The chain runs to 328 residues: Tetraacyldisaccharide 4'-kinase (328 aa).

55-62 (TAGGNGKT) serves as a coordination point for ATP.

The protein belongs to the LpxK family.

The enzyme catalyses a lipid A disaccharide + ATP = a lipid IVA + ADP + H(+). Its pathway is glycolipid biosynthesis; lipid IV(A) biosynthesis; lipid IV(A) from (3R)-3-hydroxytetradecanoyl-[acyl-carrier-protein] and UDP-N-acetyl-alpha-D-glucosamine: step 6/6. Transfers the gamma-phosphate of ATP to the 4'-position of a tetraacyldisaccharide 1-phosphate intermediate (termed DS-1-P) to form tetraacyldisaccharide 1,4'-bis-phosphate (lipid IVA). The chain is Tetraacyldisaccharide 4'-kinase from Escherichia fergusonii (strain ATCC 35469 / DSM 13698 / CCUG 18766 / IAM 14443 / JCM 21226 / LMG 7866 / NBRC 102419 / NCTC 12128 / CDC 0568-73).